We begin with the raw amino-acid sequence, 394 residues long: Protein LAX PANICLE 2 (394 aa).

A disordered region spans residues 1-193; the sequence is MVPARSLAHP…PTPRHHHHDV (193 aa). Over residues 8–20 the composition is skewed to basic residues; sequence AHPHPHLVRRRRD. Residues 60–84 are compositionally biased toward basic and acidic residues; it reads QHDPPKQPPPREADDDHHRIQEREP. 3 stretches are compositionally biased toward low complexity: residues 90–101, 119–131, and 146–155; these read TTTRNQRLQLQL, GTSG…SSSN, and GPASPGASAG. Positions 170 to 185 are enriched in pro residues; that stretch reads APQPPTPTPTPTPTPT.

As to quaternary structure, interacts with LAX1.

It is found in the nucleus. In terms of biological role, involved in the regulation of shoot branching by controlling axillary meristem (AM) formation. Functions in association with LAX1 to regulate the process of AM formation. Possesses transactivation activity in yeast. This is Protein LAX PANICLE 2 from Oryza sativa subsp. japonica (Rice).